The chain runs to 198 residues: uncharacterized protein (198 aa).

2 disordered regions span residues 15 to 69 (RLGQ…KDTR) and 172 to 198 (FSVK…LWGL). Basic and acidic residues-rich tracts occupy residues 37 to 49 (HKSF…DQSR) and 56 to 69 (FNEK…KDTR). Over residues 176 to 186 (ESSNLSNNDSD) the composition is skewed to low complexity. Residues 187–198 (ASLDEDTLLWGL) show a composition bias toward acidic residues.

The protein resides in the nucleus. This is an uncharacterized protein from Schizosaccharomyces pombe (strain 972 / ATCC 24843) (Fission yeast).